We begin with the raw amino-acid sequence, 1488 residues long: MIERGKFRSLTLINWNGFFARTFDLDELVTTLSGGNGAGKSTTMAAFVTALIPDLTLLHFRNTTEAGATSGSRDKGLHGKLKAGVCYSMLDTINSRHQRVVVGVRLQQVAGRDRKVDIKPFAIQGLPMSVQPTQLVTETLNERQARVLSLAELKDKLDEMEGVQFKQFNSITDYHSLMFDLGIIARRLRSASDRSKFYRLIEASLYGGISSAITRSLRDYLLPENSGVRKAFQDMEAALRENRLTLEAIRVTQSDRDLFKHLISEATDYVAADYMRHANERRVHLDQALAFRRELYTSRKQLAAEQYKHVDMARELGEHNGAEGSLEADYQAASDHLNLVQTALRQQEKIERYEADLEELQIRLEEQNEVVAEAAEMQDENEARAEAAELEVDELKSQLADYQQALDVQQTRAIQYNQAISALARAKELCHLPDLTPESAAEWLDTFQAKEQEATEKLLSLEQKMSVAQTAHSQFEQAYQLVAAINGPLARSEAWDVARELLRDGVNQRHLAEQVQPLRMRLSELEQRLREQQEAERLLAEFCKRQGKNFDIDELEALHQELEARIASLSDSVSSASEQRMALRQEQEQLQSRIQHLMQRAPVWLAAQNSLNQLSEQCGEEFTSSQEVTEYLQQLLEREREAIVERDEVGARKNAVDEEIERLSQPGGAEDQRLNALAERFGGVLLSEIYDDVSLEDAPYFSALYGPSRHAIVVPDLSQIAEQLEGLTDCPEDLYLIEGDPQSFDDSVFSVDELEKAVVVKIADRQWRYSRFPSLPIFGRAARENRIESLHAEREVLSERFATLSFDVQKTQRLHQAFSRFIGSHLSVAFEDDPEAEIRRLNGRRVELERALATHESDNQQQRLQFEQAKEGVSALNRLLPRLNLLADETLADRVDEIQERLDEAQEAARFVQQYGNQLAKLEPVVSVLQSDPEQFEQLKEDYAWSQQMQRDARQQAFALAEVVERRAHFSYSDSAEMLSGNSDLNEKLRQRLEQAEAERTRAREALRSHAAQLSQYSQVLASLKSSYDTKKELLNDLQRELQDIGVRADSGAEERARQRRDELHAQLSNNRSRRNQLEKALTFCEAEMENLARKLRKLERDYHEMREQVVTAKAGWCAVMRMVKDNGVERRLHRRELAYLSADELRSMSDKALGALRLAVADNEHLRDVLRLSEDPKRPERKIQFFVAVYQHLRERIRQDIIRTDDPVEAIEQMEIELSRLTEELTSREQKLAISSRSVANIIRKTIQREQNRIRMLNQGLQSVSFGQVNSVRLNVNVRETHATLLDVLSEQQEQHQDLFNSNRLTFSEALAKLYQRLNPQIDMGQRTPQTIGEELLDYRNYLEMEVEVNRGSDGWLRAESGALSTGEAIGTGMSILVMVVQSWEDEARRLRGKDISPCRLLFLDEAARLDARSIATLFELCERLQMQLIIAAPENISPEKGTTYKLVRKVFQNTEHVHVVGLRGFAPQLPETLPGTQTEDTPSEAS.

Gly-34–Ser-41 contacts ATP. 3 coiled-coil regions span residues Leu-326 to Gln-418, Leu-444 to His-472, and Arg-509 to Pro-602. The flexible hinge stretch occupies residues Pro-666 to Arg-783. Coiled coils occupy residues Glu-835 to Glu-923, Glu-977 to Gly-1116, and Val-1209 to Val-1265. The interval Ala-1049–Arg-1074 is disordered. The span at Ser-1051–His-1065 shows a compositional bias: basic and acidic residues.

The protein belongs to the SMC family. MukB subfamily. As to quaternary structure, homodimerization via its hinge domain. Binds to DNA via its C-terminal region. Interacts, and probably forms a ternary complex, with MukE and MukF via its C-terminal region. The complex formation is stimulated by calcium or magnesium. Interacts with tubulin-related protein FtsZ.

It is found in the cytoplasm. Its subcellular location is the nucleoid. In terms of biological role, plays a central role in chromosome condensation, segregation and cell cycle progression. Functions as a homodimer, which is essential for chromosome partition. Involved in negative DNA supercoiling in vivo, and by this means organize and compact chromosomes. May achieve or facilitate chromosome segregation by condensation DNA from both sides of a centrally located replisome during cell division. This chain is Chromosome partition protein MukB, found in Salmonella schwarzengrund (strain CVM19633).